The chain runs to 424 residues: Poly-cysteine and histidine-tailed protein (424 aa).

An N-terminal signal peptide occupies residues 1–17; that stretch reads MAFSTIVVLFVAAVGFG. Asparagine 291 carries N-linked (GlcNAc...) asparagine glycosylation. Over residues 372 to 390 the composition is skewed to basic and acidic residues; it reads VGGKKQQKDQPESEKKAEN. A disordered region spans residues 372 to 424; that stretch reads VGGKKQQKDQPESEKKAENMPETTGNASHHQHRHHHGDSSSESHEQHHHHHHH. Asparagine 397 carries N-linked (GlcNAc...) asparagine glycosylation.

Glycosylated. As to expression, expressed in larval tissues like cuticle, hypodermis and muscle (at protein level). Note=Not excreted into striated muscle fibers or nurse cell.

It localises to the secreted. Its function is as follows. Binds iron and zinc. May bind nickel. This is Poly-cysteine and histidine-tailed protein from Trichinella spiralis (Trichina worm).